The primary structure comprises 545 residues: Hydroxylamine reductase (545 aa).

[4Fe-4S] cluster is bound by residues C3, C6, C15, and C21. Positions 240, 264, 309, 401, 429, 454, 488, and 490 each coordinate hybrid [4Fe-2O-2S] cluster. Residue C401 is modified to Cysteine persulfide.

The protein belongs to the HCP family. The cofactor is [4Fe-4S] cluster. Hybrid [4Fe-2O-2S] cluster is required as a cofactor.

It localises to the cytoplasm. The catalysed reaction is A + NH4(+) + H2O = hydroxylamine + AH2 + H(+). Functionally, catalyzes the reduction of hydroxylamine to form NH(3) and H(2)O. This is Hydroxylamine reductase from Rippkaea orientalis (strain PCC 8801 / RF-1) (Cyanothece sp. (strain PCC 8801)).